Here is a 138-residue protein sequence, read N- to C-terminus: Superoxide dismutase [Mn] (138 aa).

Mn(2+)-binding residues include His-1, His-49, Asp-133, and His-137.

It belongs to the iron/manganese superoxide dismutase family. Requires Mn(2+) as cofactor.

The enzyme catalyses 2 superoxide + 2 H(+) = H2O2 + O2. Its function is as follows. Destroys superoxide anion radicals which are normally produced within the cells and which are toxic to biological systems. This Mycobacterium celatum protein is Superoxide dismutase [Mn] (sodA).